Here is a 421-residue protein sequence, read N- to C-terminus: Esterase LipQ (421 aa).

Residues Ser-249, Asp-344, and His-377 contribute to the active site.

It belongs to the 'GDXG' lipolytic enzyme family.

The enzyme catalyses hexadecanoate ester + H2O = an aliphatic alcohol + hexadecanoate + H(+). In terms of biological role, shows lipase activity. Is highly immunogenic and may play an important role in the virulence and pathogenesis of M.tuberculosis infection, by altering the balance of cytokines. Significantly down-regulates the expression level of pro-inflammatory cytokines (TNF-alpha and IFN-gamma) and up-regulates the level of anti-inflammatory cytokines such as IL-4 and IL-10 as compared to LPS stimulated macrophages. Also inhibits the expression of iNOS, TLR2 and transcription factor NF-kappa-B in LPS stimulated macrophages whereas the expression of TLR-4 remains unchanged. In Mycobacterium tuberculosis (strain ATCC 25618 / H37Rv), this protein is Esterase LipQ.